Reading from the N-terminus, the 154-residue chain is NADPH-dependent 7-cyano-7-deazaguanine reductase (154 aa).

Positions Met1–Ser21 are enriched in polar residues. A disordered region spans residues Met1–Glu28. Cys52 acts as the Thioimide intermediate in catalysis. Catalysis depends on Asp59, which acts as the Proton donor. Substrate contacts are provided by residues Val74–Ser76 and His93–Glu94.

It belongs to the GTP cyclohydrolase I family. QueF type 1 subfamily.

The protein resides in the cytoplasm. It carries out the reaction 7-aminomethyl-7-carbaguanine + 2 NADP(+) = 7-cyano-7-deazaguanine + 2 NADPH + 3 H(+). Its pathway is tRNA modification; tRNA-queuosine biosynthesis. Functionally, catalyzes the NADPH-dependent reduction of 7-cyano-7-deazaguanine (preQ0) to 7-aminomethyl-7-deazaguanine (preQ1). The chain is NADPH-dependent 7-cyano-7-deazaguanine reductase from Rhizobium johnstonii (strain DSM 114642 / LMG 32736 / 3841) (Rhizobium leguminosarum bv. viciae).